A 150-amino-acid polypeptide reads, in one-letter code: Allograft inflammatory factor 1-like (150 aa).

Residue S2 is modified to N-acetylserine. S2 is modified (phosphoserine). Residues 47-82 (EKLTAFKEKYMEFDLNNEGEIDLMSLKRMMEKLGVP) enclose the EF-hand 1 domain. The Ca(2+) site is built by D60, N62, E64, and E66. The region spanning 83 to 117 (KTHLEMKKMISEVTGGVSDTISYRDFVNMMLGKRS) is the EF-hand 2; degenerate domain. The tract at residues 129-150 (KANESSPKPVGPPPERDIASLP) is disordered. S134 is subject to Phosphoserine.

In terms of assembly, homodimer (Potential). Monomer.

It is found in the cytoplasm. The protein resides in the cytoskeleton. The protein localises to the cell projection. It localises to the ruffle membrane. Functionally, actin-binding protein that promotes actin bundling. May neither bind calcium nor depend on calcium for function. In Homo sapiens (Human), this protein is Allograft inflammatory factor 1-like (AIF1L).